The primary structure comprises 481 residues: Glutamyl-tRNA(Gln) amidotransferase subunit A (481 aa).

Residues lysine 74 and serine 149 each act as charge relay system in the active site. Serine 173 functions as the Acyl-ester intermediate in the catalytic mechanism.

It belongs to the amidase family. GatA subfamily. In terms of assembly, heterotrimer of A, B and C subunits.

It carries out the reaction L-glutamyl-tRNA(Gln) + L-glutamine + ATP + H2O = L-glutaminyl-tRNA(Gln) + L-glutamate + ADP + phosphate + H(+). In terms of biological role, allows the formation of correctly charged Gln-tRNA(Gln) through the transamidation of misacylated Glu-tRNA(Gln) in organisms which lack glutaminyl-tRNA synthetase. The reaction takes place in the presence of glutamine and ATP through an activated gamma-phospho-Glu-tRNA(Gln). This Francisella tularensis subsp. novicida (strain U112) protein is Glutamyl-tRNA(Gln) amidotransferase subunit A.